A 382-amino-acid polypeptide reads, in one-letter code: Proton extrusion protein PxcA (382 aa).

4 consecutive transmembrane segments (helical) span residues 156-176 (TLISLKVLLLLILVPLLVQQV), 257-277 (AVKNVLADISATIAFVVVCLF), 305-325 (IILFTDIFVGFHSPEGWTVLL), and 340-360 (FILLFIATFPVILATIFKYWI).

Belongs to the CemA family.

It is found in the cell inner membrane. Functionally, required for H(+) efflux immediately after light irradiation to form a rapid H(+) concentration gradient across the thylakoid membranes. Together with PxcL, contributes to transient H(+) uptake following dark to light transition. In Synechococcus sp. (strain CC9311), this protein is Proton extrusion protein PxcA.